The following is a 353-amino-acid chain: Green-sensitive opsin-2 (353 aa).

Residues 1 to 47 (MAAHEPVFAARRHNEDTTRESAFVYTNANNTRDPFEGPNYHIAPRWV) lie on the Extracellular side of the membrane. Asparagine 29 carries N-linked (GlcNAc...) asparagine glycosylation. The chain crosses the membrane as a helical span at residues 48–72 (YNVSSLWMIFVVIASVFTNGLVIVA). Over 73–84 (TAKFKKLRHPLN) the chain is Cytoplasmic. Residues 85–110 (WILVNLAIADLGETVLASTISVINQI) traverse the membrane as a helical segment. At 111–124 (FGYFILGHPMCVFE) the chain is on the extracellular side. Cysteine 121 and cysteine 198 form a disulfide bridge. A helical transmembrane segment spans residues 125-144 (GWTVSVCGITALWSLTIISW). Over 145 to 163 (ERWVVVCKPFGNVKFDGKW) the chain is Cytoplasmic. Residues 164–187 (AAGGIIFSWVWAIIWCTPPIFGWS) traverse the membrane as a helical segment. At 188–213 (RYWPHGLKTSCGPDVFSGSEDPGVAS) the chain is on the extracellular side. Residues 214 to 241 (YMITLMLTCCILPLSIIIICYIFVWSAI) traverse the membrane as a helical segment. The Cytoplasmic portion of the chain corresponds to 242 to 263 (HQVAQQQKDSESTQKAEKEVSR). The helical transmembrane segment at 264–287 (MVVVMILAFIVCWGPYASFATFSA) threads the bilayer. Topologically, residues 288-295 (VNPGYAWH) are extracellular. Residues 296-320 (PLAAAMPAYFAKSATIYNPIIYVFM) form a helical membrane-spanning segment. Lysine 307 is subject to N6-(retinylidene)lysine. Over 321-353 (NRQFRSCIMQLFGKKVEDASEVSGSTTEVSTAS) the chain is Cytoplasmic.

It belongs to the G-protein coupled receptor 1 family. Opsin subfamily. As to expression, the color pigments are found in the cone photoreceptor cells.

Its subcellular location is the membrane. In terms of biological role, visual pigments are the light-absorbing molecules that mediate vision. They consist of an apoprotein, opsin, covalently linked to cis-retinal. In Psalidodon fasciatus (Banded astyanax), this protein is Green-sensitive opsin-2 (G101).